Consider the following 123-residue polypeptide: UPF0102 protein DR_2282 (123 aa).

Belongs to the UPF0102 family.

This is UPF0102 protein DR_2282 from Deinococcus radiodurans (strain ATCC 13939 / DSM 20539 / JCM 16871 / CCUG 27074 / LMG 4051 / NBRC 15346 / NCIMB 9279 / VKM B-1422 / R1).